A 281-amino-acid chain; its full sequence is NADPH-dependent 7-cyano-7-deazaguanine reductase (281 aa).

Residue 88–90 (VES) participates in substrate binding. Position 90-91 (90-91 (SK)) interacts with NADPH. Cysteine 189 (thioimide intermediate) is an active-site residue. Aspartate 196 functions as the Proton donor in the catalytic mechanism. Substrate is bound at residue 228–229 (HE). 257-258 (RG) serves as a coordination point for NADPH.

Belongs to the GTP cyclohydrolase I family. QueF type 2 subfamily. As to quaternary structure, homodimer.

It localises to the cytoplasm. The enzyme catalyses 7-aminomethyl-7-carbaguanine + 2 NADP(+) = 7-cyano-7-deazaguanine + 2 NADPH + 3 H(+). It participates in tRNA modification; tRNA-queuosine biosynthesis. Its function is as follows. Catalyzes the NADPH-dependent reduction of 7-cyano-7-deazaguanine (preQ0) to 7-aminomethyl-7-deazaguanine (preQ1). This is NADPH-dependent 7-cyano-7-deazaguanine reductase from Klebsiella pneumoniae subsp. pneumoniae (strain ATCC 700721 / MGH 78578).